The sequence spans 205 residues: Nuclear transcription factor Y subunit C-6 (205 aa).

Residues 1–24 form a disordered region; the sequence is MEPKSTTPPPPPPPPVLGAPVPYP.

Belongs to the NFYC/HAP5 subunit family. Heterotrimeric transcription factor composed of three components, NF-YA, NF-YB and NF-YC. NF-YB and NF-YC must interact and dimerize for NF-YA association and DNA binding. Interacts with NFYB2. Interacts with NFYB8, NFYB10 and HD5/NFYB11.

It localises to the nucleus. It is found in the cytoplasm. In terms of biological role, component of the NF-Y/HAP transcription factor complex. This is Nuclear transcription factor Y subunit C-6 from Oryza sativa subsp. japonica (Rice).